The primary structure comprises 255 residues: Proteasome subunit alpha type-3 (255 aa).

Residue serine 2 is modified to N-acetylserine. Lysine 57, lysine 206, and lysine 230 each carry N6-acetyllysine. 2 positions are modified to phosphoserine: serine 243 and serine 250.

It belongs to the peptidase T1A family. As to quaternary structure, the 26S proteasome consists of a 20S proteasome core and two 19S regulatory subunits. The 20S proteasome core is a barrel-shaped complex made of 28 subunits that are arranged in four stacked rings. The two outer rings are each formed by seven alpha subunits, and the two inner rings are formed by seven beta subunits. The proteolytic activity is exerted by three beta-subunits PSMB5, PSMB6 and PSMB7. Interacts with AURKB. Interacts with CDKN1A. Interacts with MDM2 and RB1. Interacts with the C-terminus of TBXA2R isoform 2. Interacts with DNAJB2. (Microbial infection) Interacts with HIV-1 Tat protein. In terms of assembly, (Microbial infection) Interacts with hepatitis C virus (HCV) F protein. As to quaternary structure, (Microbial infection) Interacts with Epstein-Barr virus EBNA3 proteins.

The protein localises to the cytoplasm. It localises to the nucleus. Functionally, component of the 20S core proteasome complex involved in the proteolytic degradation of most intracellular proteins. This complex plays numerous essential roles within the cell by associating with different regulatory particles. Associated with two 19S regulatory particles, forms the 26S proteasome and thus participates in the ATP-dependent degradation of ubiquitinated proteins. The 26S proteasome plays a key role in the maintenance of protein homeostasis by removing misfolded or damaged proteins that could impair cellular functions, and by removing proteins whose functions are no longer required. Associated with the PA200 or PA28, the 20S proteasome mediates ubiquitin-independent protein degradation. This type of proteolysis is required in several pathways including spermatogenesis (20S-PA200 complex) or generation of a subset of MHC class I-presented antigenic peptides (20S-PA28 complex). Binds to the C-terminus of CDKN1A and thereby mediates its degradation. Negatively regulates the membrane trafficking of the cell-surface thromboxane A2 receptor (TBXA2R) isoform 2. This chain is Proteasome subunit alpha type-3, found in Homo sapiens (Human).